We begin with the raw amino-acid sequence, 791 residues long: FHF complex subunit HOOK-interacting protein 1B (791 aa).

2 disordered regions span residues 465–510 and 524–556; these read APSP…VPRP and SLGGSESPGPAPRSPGLTASPTSSPGRRPSPAE. Serine 467 carries the phosphoserine modification. Residues 496-510 are compositionally biased toward low complexity; sequence SPSVDSSSVVTVPRP. Phosphoserine is present on residues serine 524, serine 537, serine 543, serine 547, and serine 679. Residues 541–552 are compositionally biased toward low complexity; it reads TASPTSSPGRRP. Phosphothreonine is present on threonine 708. Position 716 is a phosphoserine (serine 716).

The protein belongs to the FHIP family. Component of the FTS/Hook/FHIP complex (FHF complex), composed of AKTIP/FTS, FHIP1B, and one or more members of the Hook family of proteins HOOK1, HOOK2, and HOOK3. The FHF complex associates with the homotypic vesicular sorting complex (the HOPS complex).

Component of the FTS/Hook/FHIP complex (FHF complex). The FHF complex may function to promote vesicle trafficking and/or fusion via the homotypic vesicular protein sorting complex (the HOPS complex). FHF complex promotes the distribution of AP-4 complex to the perinuclear area of the cell. The protein is FHF complex subunit HOOK-interacting protein 1B (Fhip1b) of Rattus norvegicus (Rat).